The primary structure comprises 234 residues: Small ribosomal subunit protein uS3 (234 aa).

Positions 39 to 107 (IRKYVKKELY…EIAVNIKEER (69 aa)) constitute a KH type-2 domain. The segment covering 213-222 (PTEKAEETTS) has biased composition (basic and acidic residues). The tract at residues 213–234 (PTEKAEETTSKPKRRPAKKRGK) is disordered. A compositionally biased stretch (basic residues) spans 223–234 (KPKRRPAKKRGK).

The protein belongs to the universal ribosomal protein uS3 family. As to quaternary structure, part of the 30S ribosomal subunit. Forms a tight complex with proteins S10 and S14.

In terms of biological role, binds the lower part of the 30S subunit head. Binds mRNA in the 70S ribosome, positioning it for translation. The chain is Small ribosomal subunit protein uS3 from Aliarcobacter butzleri (strain RM4018) (Arcobacter butzleri).